A 299-amino-acid chain; its full sequence is Protoheme IX farnesyltransferase (299 aa).

The next 8 membrane-spanning stretches (helical) occupy residues 25 to 45, 51 to 71, 97 to 117, 119 to 139, 147 to 167, 173 to 193, 225 to 245, and 275 to 295; these read IVSLIVFTAIVGMFLSVPDLA, LFGTLGIGLGAASAAAINHLI, ALAFAITLGLSSMIILYFLVN, LTAWLTLASMIGYGIIYTAFL, IVLGGASGAMPPVLGWAAVTG, AFLLFLIIFVWTPPHFWALAL, FLLFAVSLLPFVSHMSGLLYL, and FGYSIVYLAALFAFLLVDHYL.

It belongs to the UbiA prenyltransferase family. Protoheme IX farnesyltransferase subfamily.

The protein localises to the cell inner membrane. It catalyses the reaction heme b + (2E,6E)-farnesyl diphosphate + H2O = Fe(II)-heme o + diphosphate. It participates in porphyrin-containing compound metabolism; heme O biosynthesis; heme O from protoheme: step 1/1. Functionally, converts heme B (protoheme IX) to heme O by substitution of the vinyl group on carbon 2 of heme B porphyrin ring with a hydroxyethyl farnesyl side group. This chain is Protoheme IX farnesyltransferase, found in Nitrosococcus oceani (strain ATCC 19707 / BCRC 17464 / JCM 30415 / NCIMB 11848 / C-107).